The sequence spans 88 residues: Small ribosomal subunit protein bS20 (88 aa).

The segment at 1–27 (MANSKSAKKRALQSEKRRQHNASRRSM) is disordered.

The protein belongs to the bacterial ribosomal protein bS20 family.

In terms of biological role, binds directly to 16S ribosomal RNA. The sequence is that of Small ribosomal subunit protein bS20 from Shewanella baltica (strain OS223).